The following is a 246-amino-acid chain: Pyridoxine 5'-phosphate synthase (246 aa).

A 3-amino-2-oxopropyl phosphate-binding site is contributed by N7. Position 9–10 (9–10 (DH)) interacts with 1-deoxy-D-xylulose 5-phosphate. R18 is a binding site for 3-amino-2-oxopropyl phosphate. H43 serves as the catalytic Proton acceptor. 1-deoxy-D-xylulose 5-phosphate-binding residues include R45 and H50. Catalysis depends on E70, which acts as the Proton acceptor. Residue T100 coordinates 1-deoxy-D-xylulose 5-phosphate. H190 (proton donor) is an active-site residue. 3-amino-2-oxopropyl phosphate-binding positions include G191 and 212 to 213 (GH).

This sequence belongs to the PNP synthase family. As to quaternary structure, homooctamer; tetramer of dimers.

It localises to the cytoplasm. The catalysed reaction is 3-amino-2-oxopropyl phosphate + 1-deoxy-D-xylulose 5-phosphate = pyridoxine 5'-phosphate + phosphate + 2 H2O + H(+). It functions in the pathway cofactor biosynthesis; pyridoxine 5'-phosphate biosynthesis; pyridoxine 5'-phosphate from D-erythrose 4-phosphate: step 5/5. Functionally, catalyzes the complicated ring closure reaction between the two acyclic compounds 1-deoxy-D-xylulose-5-phosphate (DXP) and 3-amino-2-oxopropyl phosphate (1-amino-acetone-3-phosphate or AAP) to form pyridoxine 5'-phosphate (PNP) and inorganic phosphate. The protein is Pyridoxine 5'-phosphate synthase of Bordetella petrii (strain ATCC BAA-461 / DSM 12804 / CCUG 43448).